Consider the following 206-residue polypeptide: Uridine kinase (206 aa).

Residue 11–18 (GGTGSGKS) coordinates ATP.

Belongs to the uridine kinase family.

It localises to the cytoplasm. It catalyses the reaction uridine + ATP = UMP + ADP + H(+). The enzyme catalyses cytidine + ATP = CMP + ADP + H(+). It functions in the pathway pyrimidine metabolism; CTP biosynthesis via salvage pathway; CTP from cytidine: step 1/3. The protein operates within pyrimidine metabolism; UMP biosynthesis via salvage pathway; UMP from uridine: step 1/1. In Clostridium botulinum (strain Okra / Type B1), this protein is Uridine kinase.